Consider the following 146-residue polypeptide: Large ribosomal subunit protein uL15 (146 aa).

A compositionally biased stretch (basic and acidic residues) spans methionine 1 to arginine 13. Positions methionine 1–leucine 48 are disordered. Residues arginine 21–alanine 31 show a composition bias toward gly residues.

The protein belongs to the universal ribosomal protein uL15 family. Part of the 50S ribosomal subunit.

Functionally, binds to the 23S rRNA. This chain is Large ribosomal subunit protein uL15, found in Bacillus cytotoxicus (strain DSM 22905 / CIP 110041 / 391-98 / NVH 391-98).